Consider the following 327-residue polypeptide: Protein MRG2 (327 aa).

Residues 1–40 (MGSPNAAAETDLTTDDFIGDTRRDSGSDTETNTDCDGEDL) are disordered. The region spanning 52–101 (FEEGERVLAKHSDCFYEAKVLKVEFKDNEWKYFVHYIGWNKSWDEWIRLD) is the Tudor-knot domain. The disordered stretch occupies residues 133–156 (SKMKPRSPNVARGRKRKQDSVDTE). The MRG domain occupies 162 to 327 (SDNLLSFNIP…AVEEMEKKEG (166 aa)).

In terms of assembly, interacts with HAM1 and HAM2. Interacts (via MRG domain) with CO. Component of the NuA4 histone acetyltransferase complex. In terms of tissue distribution, ubiquitous. Mainly expressed in the vasculature of cotyledons and leaves, and in roots and inflorescences.

Its subcellular location is the nucleus. In terms of biological role, chromatin remodeling factor. Acts as a 'reader' protein by binding to H3K4me3 and H3K36me3 to control histone H4 acetylation. Increases the transcriptional levels of the flowering time genes FLC and FT. Binds the chromatin at the FT promoter upon interaction with CO. The sequence is that of Protein MRG2 from Arabidopsis thaliana (Mouse-ear cress).